The chain runs to 385 residues: UPF0284 protein P9215_05181 (385 aa).

Belongs to the UPF0284 family.

The protein is UPF0284 protein P9215_05181 of Prochlorococcus marinus (strain MIT 9215).